Here is a 106-residue protein sequence, read N- to C-terminus: Synaptic plasticity regulator PANTS (106 aa).

A disordered region spans residues 67–106; that stretch reads LQQSEKTRLEGKQNNSPVWTLRKNPPPDWYLPLDPGKPRQ.

Belongs to the UPF0545 family. Rapidly degraded by proteolysis following neuronal stimulation, resulting in increased AMPA receptor clustering.

It localises to the synapse. The protein resides in the synaptic cleft. Functionally, negatively regulates long-term potentiation and modulates adult synaptic plasticity. This Xenopus laevis (African clawed frog) protein is Synaptic plasticity regulator PANTS.